Here is a 67-residue protein sequence, read N- to C-terminus: Protein C' (67 aa).

Belongs to the rhabdoviruses C protein family.

In terms of biological role, seems to stimulates transcription by the viral polymerase. May play a role in viral pathogenesis or transmission by insects vectors. In Vesicular stomatitis Indiana virus (strain San Juan) (VSIV), this protein is Protein C' (P).